The chain runs to 399 residues: GDP-D-glucose phosphorylase 1 (399 aa).

His237 functions as the Tele-GMP-histidine intermediate in the catalytic mechanism.

The protein belongs to the GDPGP1 family.

It is found in the cytoplasm. The enzyme catalyses GDP-alpha-D-glucose + phosphate = alpha-D-glucose 1-phosphate + GDP + H(+). Its function is as follows. Specific and highly efficient GDP-D-glucose phosphorylase regulating the levels of GDP-D-glucose in cells. This chain is GDP-D-glucose phosphorylase 1 (gdpgp1), found in Xenopus laevis (African clawed frog).